Reading from the N-terminus, the 259-residue chain is Indole-3-glycerol phosphate synthase (259 aa).

The protein belongs to the TrpC family.

The enzyme catalyses 1-(2-carboxyphenylamino)-1-deoxy-D-ribulose 5-phosphate + H(+) = (1S,2R)-1-C-(indol-3-yl)glycerol 3-phosphate + CO2 + H2O. Its pathway is amino-acid biosynthesis; L-tryptophan biosynthesis; L-tryptophan from chorismate: step 4/5. This chain is Indole-3-glycerol phosphate synthase, found in Rhodopirellula baltica (strain DSM 10527 / NCIMB 13988 / SH1).